The following is a 726-amino-acid chain: Serine/threonine-protein kinase PKH3 (726 aa).

The region spanning 10-271 (FLFREELGHG…LEQIKKHKWF (262 aa)) is the Protein kinase domain. ATP is bound by residues 16–24 (LGHGSYSTV) and K39. D136 serves as the catalytic Proton acceptor. A disordered region spans residues 629–679 (QDIPLPSPAKSSSNSGVSEPISKIPPRQLVSASEQSHKAKSEAHTKKANSY). The segment covering 663–673 (QSHKAKSEAHT) has biased composition (basic and acidic residues).

This sequence belongs to the protein kinase superfamily. Ser/Thr protein kinase family.

The enzyme catalyses L-seryl-[protein] + ATP = O-phospho-L-seryl-[protein] + ADP + H(+). It carries out the reaction L-threonyl-[protein] + ATP = O-phospho-L-threonyl-[protein] + ADP + H(+). Functionally, serine/threonine-protein kinase. This chain is Serine/threonine-protein kinase PKH3 (PKH3), found in Eremothecium gossypii (strain ATCC 10895 / CBS 109.51 / FGSC 9923 / NRRL Y-1056) (Yeast).